Here is a 429-residue protein sequence, read N- to C-terminus: 3-phosphoshikimate 1-carboxyvinyltransferase (429 aa).

3 residues coordinate 3-phosphoshikimate: Lys-22, Ser-23, and Arg-27. Lys-22 serves as a coordination point for phosphoenolpyruvate. Phosphoenolpyruvate contacts are provided by Gly-94 and Arg-122. Residues Ser-167, Gln-169, Asp-315, and Lys-342 each contribute to the 3-phosphoshikimate site. Gln-169 is a binding site for phosphoenolpyruvate. Catalysis depends on Asp-315, which acts as the Proton acceptor. Residues Arg-346 and Arg-388 each coordinate phosphoenolpyruvate.

Belongs to the EPSP synthase family. In terms of assembly, monomer.

It localises to the cytoplasm. The catalysed reaction is 3-phosphoshikimate + phosphoenolpyruvate = 5-O-(1-carboxyvinyl)-3-phosphoshikimate + phosphate. It participates in metabolic intermediate biosynthesis; chorismate biosynthesis; chorismate from D-erythrose 4-phosphate and phosphoenolpyruvate: step 6/7. In terms of biological role, catalyzes the transfer of the enolpyruvyl moiety of phosphoenolpyruvate (PEP) to the 5-hydroxyl of shikimate-3-phosphate (S3P) to produce enolpyruvyl shikimate-3-phosphate and inorganic phosphate. This Geotalea daltonii (strain DSM 22248 / JCM 15807 / FRC-32) (Geobacter daltonii) protein is 3-phosphoshikimate 1-carboxyvinyltransferase.